Here is a 79-residue protein sequence, read N- to C-terminus: ESX secretion system protein YukD (79 aa).

Belongs to the EsaB family.

In terms of biological role, required for YukE secretion. Probable component or regulator of the ESX/ESAT-6-like secretion system (BsEss). The protein is ESX secretion system protein YukD (yukD) of Bacillus subtilis (strain 168).